The sequence spans 525 residues: Anti-silencing protein 2 (525 aa).

Residues 467–525 (LPRVPTDSPQLPSKDKSQETAKKDDRPKLVANEPVTLDTSTPPVAQSLADSKHCSGLHK) form a disordered region. The segment covering 479 to 494 (SKDKSQETAKKDDRPK) has biased composition (basic and acidic residues).

Derepression of silent mating type loci when overexpressed. This chain is Anti-silencing protein 2 (ASF2), found in Saccharomyces cerevisiae (strain ATCC 204508 / S288c) (Baker's yeast).